We begin with the raw amino-acid sequence, 262 residues long: Tryptophan synthase alpha chain (262 aa).

Catalysis depends on proton acceptor residues Glu-49 and Asp-60.

It belongs to the TrpA family. As to quaternary structure, tetramer of two alpha and two beta chains.

It catalyses the reaction (1S,2R)-1-C-(indol-3-yl)glycerol 3-phosphate + L-serine = D-glyceraldehyde 3-phosphate + L-tryptophan + H2O. The protein operates within amino-acid biosynthesis; L-tryptophan biosynthesis; L-tryptophan from chorismate: step 5/5. Its function is as follows. The alpha subunit is responsible for the aldol cleavage of indoleglycerol phosphate to indole and glyceraldehyde 3-phosphate. The chain is Tryptophan synthase alpha chain from Thermoanaerobacter pseudethanolicus (strain ATCC 33223 / 39E) (Clostridium thermohydrosulfuricum).